Consider the following 342-residue polypeptide: Phenylalanine--tRNA ligase alpha subunit (342 aa).

Residue E255 coordinates Mg(2+).

This sequence belongs to the class-II aminoacyl-tRNA synthetase family. Phe-tRNA synthetase alpha subunit type 1 subfamily. Tetramer of two alpha and two beta subunits. Requires Mg(2+) as cofactor.

It is found in the cytoplasm. The enzyme catalyses tRNA(Phe) + L-phenylalanine + ATP = L-phenylalanyl-tRNA(Phe) + AMP + diphosphate + H(+). The protein is Phenylalanine--tRNA ligase alpha subunit of Pelodictyon phaeoclathratiforme (strain DSM 5477 / BU-1).